The sequence spans 190 residues: ATP synthase subunit delta (190 aa).

It belongs to the ATPase delta chain family. As to quaternary structure, F-type ATPases have 2 components, F(1) - the catalytic core - and F(0) - the membrane proton channel. F(1) has five subunits: alpha(3), beta(3), gamma(1), delta(1), epsilon(1). F(0) has three main subunits: a(1), b(2) and c(10-14). The alpha and beta chains form an alternating ring which encloses part of the gamma chain. F(1) is attached to F(0) by a central stalk formed by the gamma and epsilon chains, while a peripheral stalk is formed by the delta and b chains.

The protein localises to the cell inner membrane. In terms of biological role, f(1)F(0) ATP synthase produces ATP from ADP in the presence of a proton or sodium gradient. F-type ATPases consist of two structural domains, F(1) containing the extramembraneous catalytic core and F(0) containing the membrane proton channel, linked together by a central stalk and a peripheral stalk. During catalysis, ATP synthesis in the catalytic domain of F(1) is coupled via a rotary mechanism of the central stalk subunits to proton translocation. Its function is as follows. This protein is part of the stalk that links CF(0) to CF(1). It either transmits conformational changes from CF(0) to CF(1) or is implicated in proton conduction. The protein is ATP synthase subunit delta of Methylobacterium sp. (strain 4-46).